A 309-amino-acid chain; its full sequence is DDRGK domain-containing protein 1 (309 aa).

The Lumenal portion of the chain corresponds to 1–2; the sequence is MD. The helical transmembrane segment at 3 to 23 threads the bilayer; that stretch reads LIILVGIAVALLVVIVTLYLL. Residues 24–309 lie on the Cytoplasmic side of the membrane; the sequence is QKKNAAPETK…ISAGGGEASS (286 aa). Disordered regions lie at residues 32–53 and 79–175; these read TKVA…VPRR and ALPA…KEER. Residues 87 to 96 show a composition bias toward acidic residues; the sequence is DHEDEGQVDG. Basic and acidic residues predominate over residues 107-175; the sequence is LDEKMGAKKR…DAERLAKEER (69 aa). Residues 120 to 177 are a coiled coil; sequence EAKEQKRLQREQELHDREQRKVKEAKEEAERKQQEDLEAEAERKRVDAERLAKEERER.

This sequence belongs to the DDRGK1 family. Interacts with Atg9; the interaction is transient.

Its subcellular location is the endoplasmic reticulum membrane. Its function is as follows. Substrate adapter for ufmylation, the covalent attachment of the ubiquitin-like modifier UFM1 to substrate proteins. Required for ufmylation of Atg9; protects the nervous system during aging, possibly by stabilizing Atg9 and supporting its function. The protein is DDRGK domain-containing protein 1 of Drosophila melanogaster (Fruit fly).